The following is a 465-amino-acid chain: NADH-quinone oxidoreductase subunit N (465 aa).

The next 13 helical transmembrane spans lie at 9-29 (FNFV…VLLL), 44-64 (ASII…GFVL), 73-93 (LFVS…FSML), 110-130 (FLFM…IVIF), 159-179 (YFTL…FVYL), 198-218 (PILL…LSIA), 235-255 (FIAF…LRIF), 265-285 (EYIV…VALI), 292-312 (MLAY…VSSM), 327-347 (IFAL…IFLI), 371-391 (IMLA…IFWG), 405-427 (YALV…KILI), and 444-464 (VKQK…VFLL).

This sequence belongs to the complex I subunit 2 family. In terms of assembly, NDH-1 is composed of 14 different subunits. Subunits NuoA, H, J, K, L, M, N constitute the membrane sector of the complex.

The protein localises to the cell inner membrane. The enzyme catalyses a quinone + NADH + 5 H(+)(in) = a quinol + NAD(+) + 4 H(+)(out). In terms of biological role, NDH-1 shuttles electrons from NADH, via FMN and iron-sulfur (Fe-S) centers, to quinones in the respiratory chain. The immediate electron acceptor for the enzyme in this species is believed to be ubiquinone. Couples the redox reaction to proton translocation (for every two electrons transferred, four hydrogen ions are translocated across the cytoplasmic membrane), and thus conserves the redox energy in a proton gradient. This chain is NADH-quinone oxidoreductase subunit N, found in Campylobacter lari (strain RM2100 / D67 / ATCC BAA-1060).